The chain runs to 160 residues: Transcriptional regulator MraZ (160 aa).

SpoVT-AbrB domains are found at residues 5–50 (NFET…DGGY) and 93–136 (AVEC…SQAE).

It belongs to the MraZ family. In terms of assembly, forms oligomers.

It localises to the cytoplasm. The protein resides in the nucleoid. This is Transcriptional regulator MraZ from Geotalea daltonii (strain DSM 22248 / JCM 15807 / FRC-32) (Geobacter daltonii).